The chain runs to 227 residues: UPF0173 metal-dependent hydrolase Oter_4201 (227 aa).

The protein belongs to the UPF0173 family.

This chain is UPF0173 metal-dependent hydrolase Oter_4201, found in Opitutus terrae (strain DSM 11246 / JCM 15787 / PB90-1).